The following is a 343-amino-acid chain: Thromboxane A2 receptor (343 aa).

The Extracellular segment spans residues 1–29; sequence MWPNGSSLGPCFRPTNITLEERRLIASPW. 2 N-linked (GlcNAc...) asparagine glycosylation sites follow: N4 and N16. The helical transmembrane segment at 30–52 threads the bilayer; it reads FAASFCVVGLASNLLALSVLAGA. At 53 to 66 the chain is on the cytoplasmic side; the sequence is RQGGSHTRSSFLTF. The chain crosses the membrane as a helical span at residues 67–87; that stretch reads LCGLVLTDFLGLLVTGAIVVS. Over 88-106 the chain is Extracellular; it reads QHAALFEWHAVDPGCRLCR. An intrachain disulfide couples C105 to C183. A helical transmembrane segment spans residues 107–128; sequence FMGVVMIFFGLSPLLLGATMAS. Residues 129–149 are Cytoplasmic-facing; the sequence is ERFLGITRPFSRPVVTSQRRA. The chain crosses the membrane as a helical span at residues 150–172; the sequence is WATVGLVWAAALALGLLPLLGLG. At 173 to 193 the chain is on the extracellular side; that stretch reads RYTVQYPGSWCFLTLGAESGD. Residues 194 to 219 form a helical membrane-spanning segment; that stretch reads VAFGLLFSMLGGLSVGLSFLLNTVSV. At 220 to 246 the chain is on the cytoplasmic side; it reads ATLCHVYHGQEAAQQRPRDSEVEMMAQ. The helical transmembrane segment at 247 to 270 threads the bilayer; that stretch reads LLGIMLVASVCWLPLLVFIAQTVL. Residues 271 to 289 are Extracellular-facing; sequence RNPPAMSPSGQLSRATEQE. A helical membrane pass occupies residues 290 to 311; it reads LLIYLRVATWNQILDPWVYILF. The Cytoplasmic portion of the chain corresponds to 312–343; that stretch reads RRAVLRRLQPRLSTRPRSLSLQPQLTQRSGLQ. Phosphoserine is present on residues S329 and S331.

The protein belongs to the G-protein coupled receptor 1 family. Interacts with RPGRIP1L. Interacts with RACK1; the interaction regulates TBXA2R cell surface expression.

The protein localises to the cell membrane. Receptor for thromboxane A2 (TXA2), a potent stimulator of platelet aggregation. The activity of this receptor is mediated by a G-protein that activates a phosphatidylinositol-calcium second messenger system. In the kidney, the binding of TXA2 to glomerular TP receptors causes intense vasoconstriction. Activates phospholipase C and adenylyl cyclase. This Chlorocebus aethiops (Green monkey) protein is Thromboxane A2 receptor (TBXA2R).